Here is a 415-residue protein sequence, read N- to C-terminus: Putative glutamate--cysteine ligase 2 (415 aa).

This sequence belongs to the glutamate--cysteine ligase type 2 family. YbdK subfamily.

The catalysed reaction is L-cysteine + L-glutamate + ATP = gamma-L-glutamyl-L-cysteine + ADP + phosphate + H(+). Its function is as follows. ATP-dependent carboxylate-amine ligase which exhibits weak glutamate--cysteine ligase activity. In Bordetella petrii (strain ATCC BAA-461 / DSM 12804 / CCUG 43448), this protein is Putative glutamate--cysteine ligase 2.